The primary structure comprises 515 residues: Phospholipase A1-Igamma1, chloroplastic (515 aa).

The N-terminal 44 residues, 1-44 (MATIPSHNLRPHTTNQRTQYSLSFRPHFSRSTLITFPARSSPAR), are a transit peptide targeting the chloroplast. Positions 301-305 (GHSLG) match the GXSXG motif. The active-site Acyl-ester intermediate is Ser-303. Active-site charge relay system residues include Asp-366 and His-422.

It belongs to the AB hydrolase superfamily. Lipase family. Ubiquitous. Highly expressed in leaves.

It localises to the plastid. It is found in the chloroplast. It catalyses the reaction 1,2-dihexadecanoyl-sn-glycero-3-phosphocholine + H2O = 2-hexadecanoyl-sn-glycero-3-phosphocholine + hexadecanoate + H(+). The enzyme catalyses a 1,2-diacyl-3-O-(beta-D-galactosyl)-sn-glycerol + H2O = an acyl-3-O-(beta-D-galactosyl)-sn-glycerol + a fatty acid + H(+). It carries out the reaction a 1,2-diacyl-3-O-[alpha-D-galactosyl-(1-&gt;6)-beta-D-galactosyl]-sn-glycerol + H2O = acyl-3-O-[alpha-D-galactosyl-(1-&gt;6)-beta-D-galactosyl]-sn-glycerol + a fatty acid + H(+). Functionally, acylhydrolase with a broad specificity. Catalyzes the hydrolysis of phosphatidylcholine at the sn-1 position. Moderate activity toward phosphatidylcholine (PC), monogalactosyldiacylglycerol (MGDG), digalactosyldiacylglycerol (DGDG) and triacylglycerol (TAG). May display dual sn-1/sn-2 substrate specificity. Could be involved in early wound response. This is Phospholipase A1-Igamma1, chloroplastic from Arabidopsis thaliana (Mouse-ear cress).